The primary structure comprises 239 residues: Transcriptional regulatory protein RstA (239 aa).

The Response regulatory domain maps to Thr-3–Leu-116. Position 52 is a 4-aspartylphosphate (Asp-52). A DNA-binding region (ompR/PhoB-type) is located at residues Tyr-136–Pro-235.

Post-translationally, phosphorylated by RstB.

It is found in the cytoplasm. Member of the two-component regulatory system RstB/RstA. This chain is Transcriptional regulatory protein RstA (rstA), found in Escherichia coli (strain K12).